The primary structure comprises 194 residues: Crossover junction endodeoxyribonuclease RuvC (194 aa).

Catalysis depends on residues Asp7, Glu68, and Asp141. Residues Asp7, Glu68, and Asp141 each contribute to the Mg(2+) site. The disordered stretch occupies residues 162–194; sequence GGEREQHLTAAQRQWAEAAQNSTRRRKNSDRGM. The span at 184–194 shows a compositional bias: basic residues; sequence TRRRKNSDRGM.

Belongs to the RuvC family. As to quaternary structure, homodimer which binds Holliday junction (HJ) DNA. The HJ becomes 2-fold symmetrical on binding to RuvC with unstacked arms; it has a different conformation from HJ DNA in complex with RuvA. In the full resolvosome a probable DNA-RuvA(4)-RuvB(12)-RuvC(2) complex forms which resolves the HJ. Mg(2+) is required as a cofactor.

It is found in the cytoplasm. It catalyses the reaction Endonucleolytic cleavage at a junction such as a reciprocal single-stranded crossover between two homologous DNA duplexes (Holliday junction).. Its function is as follows. The RuvA-RuvB-RuvC complex processes Holliday junction (HJ) DNA during genetic recombination and DNA repair. Endonuclease that resolves HJ intermediates. Cleaves cruciform DNA by making single-stranded nicks across the HJ at symmetrical positions within the homologous arms, yielding a 5'-phosphate and a 3'-hydroxyl group; requires a central core of homology in the junction. The consensus cleavage sequence is 5'-(A/T)TT(C/G)-3'. Cleavage occurs on the 3'-side of the TT dinucleotide at the point of strand exchange. HJ branch migration catalyzed by RuvA-RuvB allows RuvC to scan DNA until it finds its consensus sequence, where it cleaves and resolves the cruciform DNA. The protein is Crossover junction endodeoxyribonuclease RuvC of Bifidobacterium longum subsp. infantis (strain ATCC 15697 / DSM 20088 / JCM 1222 / NCTC 11817 / S12).